An 816-amino-acid polypeptide reads, in one-letter code: Lon protease (816 aa).

Positions 40 to 244 (VPLIAVPSHP…KVLELLYEEL (205 aa)) constitute a Lon N-terminal domain. ATP is bound at residue 398–405 (GPPGVGKT). One can recognise a Lon proteolytic domain in the interval 636 to 816 (AMSPGMVMGL…SMKEVIKLLF (181 aa)). Active-site residues include serine 724 and lysine 767.

It belongs to the peptidase S16 family. In terms of assembly, homohexamer. Organized in a ring with a central cavity.

Its subcellular location is the cytoplasm. It carries out the reaction Hydrolysis of proteins in presence of ATP.. Its function is as follows. ATP-dependent serine protease that mediates the selective degradation of mutant and abnormal proteins as well as certain short-lived regulatory proteins. Required for cellular homeostasis and for survival from DNA damage and developmental changes induced by stress. Degrades polypeptides processively to yield small peptide fragments that are 5 to 10 amino acids long. Binds to DNA in a double-stranded, site-specific manner. In Borrelia duttonii (strain Ly), this protein is Lon protease.